We begin with the raw amino-acid sequence, 545 residues long: Phenylalanine--tRNA ligase beta subunit (545 aa).

The B5 domain occupies Phe-268–Pro-343. Mg(2+) is bound by residues Asp-321, Asp-327, Glu-330, and Asp-331.

The protein belongs to the phenylalanyl-tRNA synthetase beta subunit family. Type 2 subfamily. As to quaternary structure, tetramer of two alpha and two beta subunits. The cofactor is Mg(2+).

It localises to the cytoplasm. The enzyme catalyses tRNA(Phe) + L-phenylalanine + ATP = L-phenylalanyl-tRNA(Phe) + AMP + diphosphate + H(+). The protein is Phenylalanine--tRNA ligase beta subunit of Saccharolobus islandicus (strain M.14.25 / Kamchatka #1) (Sulfolobus islandicus).